Here is a 375-residue protein sequence, read N- to C-terminus: 23S rRNA (uracil(747)-C(5))-methyltransferase RlmC (375 aa).

The [4Fe-4S] cluster site is built by C3, C11, C14, and C87. S-adenosyl-L-methionine is bound by residues Q212, F241, E262, and N307. The Nucleophile role is filled by C334.

Belongs to the class I-like SAM-binding methyltransferase superfamily. RNA M5U methyltransferase family. RlmC subfamily.

It carries out the reaction uridine(747) in 23S rRNA + S-adenosyl-L-methionine = 5-methyluridine(747) in 23S rRNA + S-adenosyl-L-homocysteine + H(+). In terms of biological role, catalyzes the formation of 5-methyl-uridine at position 747 (m5U747) in 23S rRNA. In Escherichia coli O6:H1 (strain CFT073 / ATCC 700928 / UPEC), this protein is 23S rRNA (uracil(747)-C(5))-methyltransferase RlmC.